Reading from the N-terminus, the 150-residue chain is D-aminoacyl-tRNA deacylase (150 aa).

The Gly-cisPro motif, important for rejection of L-amino acids motif lies at G138 to P139.

This sequence belongs to the DTD family. Homodimer.

The protein resides in the cytoplasm. The enzyme catalyses glycyl-tRNA(Ala) + H2O = tRNA(Ala) + glycine + H(+). It catalyses the reaction a D-aminoacyl-tRNA + H2O = a tRNA + a D-alpha-amino acid + H(+). Functionally, an aminoacyl-tRNA editing enzyme that deacylates mischarged D-aminoacyl-tRNAs. Also deacylates mischarged glycyl-tRNA(Ala), protecting cells against glycine mischarging by AlaRS. Acts via tRNA-based rather than protein-based catalysis; rejects L-amino acids rather than detecting D-amino acids in the active site. By recycling D-aminoacyl-tRNA to D-amino acids and free tRNA molecules, this enzyme counteracts the toxicity associated with the formation of D-aminoacyl-tRNA entities in vivo and helps enforce protein L-homochirality. This chain is D-aminoacyl-tRNA deacylase, found in Sorangium cellulosum (strain So ce56) (Polyangium cellulosum (strain So ce56)).